Reading from the N-terminus, the 124-residue chain is ATP synthase epsilon chain (124 aa).

Belongs to the ATPase epsilon chain family. F-type ATPases have 2 components, CF(1) - the catalytic core - and CF(0) - the membrane proton channel. CF(1) has five subunits: alpha(3), beta(3), gamma(1), delta(1), epsilon(1). CF(0) has three main subunits: a, b and c.

The protein resides in the cell membrane. Functionally, produces ATP from ADP in the presence of a proton gradient across the membrane. This Corynebacterium efficiens (strain DSM 44549 / YS-314 / AJ 12310 / JCM 11189 / NBRC 100395) protein is ATP synthase epsilon chain.